Here is a 206-residue protein sequence, read N- to C-terminus: Ras-related protein Rab-18 (206 aa).

Met1 carries the N-acetylmethionine modification. GTP is bound by residues Ser17, Gly20, Lys21, Ser22, Ser23, Asp34, Pro35, Thr40, Gly66, Lys123, and Asp125. Ser22 is a binding site for Mg(2+). 2 short sequence motifs (switch) span residues 31-45 (DTFD…GVDF) and 63-80 (DTAG…YYRG). Position 40 (Thr40) interacts with Mg(2+). Phosphoserine is present on Ser144. Ala152 contacts GTP. The S-palmitoyl cysteine moiety is linked to residue Cys199. The residue at position 203 (Cys203) is a Cysteine methyl ester. Cys203 carries S-geranylgeranyl cysteine lipidation. The propeptide at 204-206 (SVL) is removed in mature form.

Belongs to the small GTPase superfamily. Rab family. In terms of assembly, interacts (in GTP-bound form) with ZFYVE1. Interacts with ZW10 and this interaction is enhanced in the presence of ZFYVE1. Interacts with BSCL2. Mg(2+) is required as a cofactor. As to expression, expression is high in the brain, moderate in the pituitary, and low in the liver. Detected in all tissues. Highly enriched on apical endocytic structures in polarized epithelial cells of kidney proximal tubules. Detected on both the apical and basolateral domains in epithelial cells of the intestine.

Its subcellular location is the endoplasmic reticulum membrane. It localises to the golgi apparatus. The protein resides in the cis-Golgi network membrane. The protein localises to the lipid droplet. It is found in the apical cell membrane. The enzyme catalyses GTP + H2O = GDP + phosphate + H(+). Regulated by guanine nucleotide exchange factor (GEF) RAB3GAP1-RAB3GAP2 complex at the cis-Golgi membrane which promotes the exchange of bound GDP for free GTP. Regulated by GTPase activating protein (GAP) TBC1D20 at the ER membrane which increases the GTP hydrolysis activity. Inhibited by GDP dissociation inhibitors (GDIs) which prevent Rab-GDP dissociation. Its function is as follows. The small GTPases Rab are key regulators of intracellular membrane trafficking, from the formation of transport vesicles to their fusion with membranes. Rabs cycle between an inactive GDP-bound form and an active GTP-bound form that is able to recruit to membranes different sets of downstream effectors directly responsible for vesicle formation, movement, tethering and fusion. RAB18 is required for the localization of ZFYVE1 to lipid droplets and for its function in mediating the formation of endoplasmic reticulum-lipid droplets (ER-LD) contacts. Also required for maintaining endoplasmic reticulum structure. Plays a role in apical endocytosis/recycling. Plays a key role in eye and brain development and neurodegeneration. This chain is Ras-related protein Rab-18, found in Mus musculus (Mouse).